Here is a 392-residue protein sequence, read N- to C-terminus: Cyclic AMP receptor 1 (392 aa).

At 1–13 (MGLLDGNPANETS) the chain is on the extracellular side. A glycan (N-linked (GlcNAc...) asparagine) is linked at Asn-10. Residues 14–33 (LVLLLFADFSSMLGCMAVLI) form a helical membrane-spanning segment. Residues 34 to 47 (GFWRLKLLRNHVTK) are Cytoplasmic-facing. The helical transmembrane segment at 48–68 (VIACFCATSFCKDFPSTILTL) threads the bilayer. Residues 69 to 83 (TNTAVNGGFPCYLYA) are Extracellular-facing. A helical transmembrane segment spans residues 84-109 (IVITYGSFACWLWTLCLAISIYMLIV). At 110–120 (KREPEPERFEK) the chain is on the cytoplasmic side. A helical membrane pass occupies residues 121–139 (YYYLLCWGLPLISTIVMLA). The Extracellular portion of the chain corresponds to 140 to 162 (KNTVQFVGNWCWIGVSFTGYRFG). A helical transmembrane segment spans residues 163-181 (LFYGPFLFIWAISAVLVGL). Over 182–205 (TSRYTYVVIHNGVSDNKEKHLTYQ) the chain is Cytoplasmic. Residues 206 to 224 (FKLINYIIVFLVCWVFAVV) traverse the membrane as a helical segment. The Extracellular portion of the chain corresponds to 225–235 (NRIVNGLNMFP). A helical transmembrane segment spans residues 236-260 (PALNILHTYLSVSHGFWASVTFIYN). The Cytoplasmic segment spans residues 261 to 392 (NPLMWRYFGA…STSTNGQGNN (132 aa)). Disordered regions lie at residues 292 to 324 (NKNN…VQCS) and 339 to 392 (VNNQ…QGNN). The segment covering 298–310 (PSPYSSSRGTSGK) has biased composition (polar residues). Phosphoserine is present on residues Ser-299, Ser-302, Ser-303, Ser-304, Ser-308, Ser-360, Ser-361, Ser-362, Ser-363, Ser-364, Ser-366, Ser-367, and Ser-368. Residues 340–367 (NNQQNLNNNYGLQQNYNDEGSSSSSLSS) show a composition bias toward low complexity. Over residues 375 to 392 (VEMQNIQISTSTNGQGNN) the composition is skewed to polar residues.

This sequence belongs to the G-protein coupled receptor 5 family. In terms of processing, C-terminal Ser or Thr residues may be phosphorylated.

It localises to the membrane. Functionally, receptor for cAMP. Coordinates the aggregation of individual cells into a multicellular organism and regulates the expression of a large number of developmentally regulated genes. The activity of this receptor is mediated by G proteins. The sequence is that of Cyclic AMP receptor 1 (carA-1) from Dictyostelium discoideum (Social amoeba).